Reading from the N-terminus, the 662-residue chain is Cytochrome bo(3) ubiquinol oxidase subunit 1 (662 aa).

Residues 1 to 14 (MFGKLTFDAIPYHE) lie on the Extracellular side of the membrane. The chain crosses the membrane as a helical span at residues 15–35 (PIIMITYIAIILIALCIASTI). The Cytoplasmic portion of the chain corresponds to 36–58 (TYYKKWKYLWYEWFTTVDHKKIS). The chain crosses the membrane as a helical span at residues 59–79 (IMYGILAFVMLFRGFVDAILM). Positions 71, 75, and 98 each coordinate a ubiquinone. At 80–106 (RTQQVVASAGFKGFLPPHHYDQIFTAH) the chain is on the extracellular side. H106 serves as a coordination point for heme b. The chain crosses the membrane as a helical span at residues 107–127 (GVIMIFFVAMPLVIGLMNLVI). Topologically, residues 128–145 (PLQIGARDVAFPFLNNLS) are cytoplasmic. The helical transmembrane segment at 146–166 (FWLNVSSAVLLTLSLGIGEFA) threads the bilayer. Topologically, residues 167-189 (QTGWLAYPPLSGIKYSSGVGVDY) are extracellular. Residue W170 participates in heme b binding. The helical transmembrane segment at 190 to 210 (WIWSLQISGVGTTLTGINFLV) threads the bilayer. Topologically, residues 211–232 (TILKMRAPGMSFFKMPVFTWTS) are cytoplasmic. A helical membrane pass occupies residues 233-253 (LCTNILIVISFPVLTVTLVLL). At 254 to 277 (TLDRYFNFHFFTNDLGGNAMMYVN) the chain is on the extracellular side. Residues 278-298 (LIWIWGHPEVYILVLPVFGVF) form a helical membrane-spanning segment. Cu(2+) is bound at residue H284. Positions 284 to 288 (HPEVY) form a cross-link, 1'-histidyl-3'-tyrosine (His-Tyr). Fe(II)-heme o is bound at residue Y288. Residues 299–309 (SEVVATFSKKR) are Cytoplasmic-facing. Residues 310–330 (LFGYVSLVWATLSITILSFIV) form a helical membrane-spanning segment. The Extracellular segment spans residues 331–346 (WLHHFFTMGAGADVNT). 2 residues coordinate Cu(2+): H333 and H334. The chain crosses the membrane as a helical span at residues 347-367 (FFGITTMIIAIPTGVKIFNWL). Over 368–380 (FTIYQGRVHMHSS) the chain is Cytoplasmic. A helical membrane pass occupies residues 381–401 (ILWTLGFLVTFSIGGMTGVLL). Over 402–413 (SVPPADFVLHNS) the chain is Extracellular. H411 and H419 together coordinate Fe(II)-heme o. The chain crosses the membrane as a helical span at residues 414 to 434 (LFLVAHFHNVIIGGVVFGCFA). H421 is a binding site for heme b. Residues 435-456 (GINYWFPKLFGFVLNEIWGKRA) are Cytoplasmic-facing. A helical transmembrane segment spans residues 457–477 (FWFWIIGFFLAFIPLYFLGLM). The Extracellular portion of the chain corresponds to 478–493 (GMTRRLSQNIDSEFHM). Positions 481 and 482 each coordinate heme b. Residues 494 to 514 (LLCIAAIGACFIGIGIICQVI) traverse the membrane as a helical segment. Residues 515 to 586 (QFFISIKERR…INSINYHDIH (72 aa)) are Cytoplasmic-facing. The chain crosses the membrane as a helical span at residues 587–607 (MPKNTGLGFMISIFSLFFGFS). Residue A608 is a topological domain, extracellular. A helical membrane pass occupies residues 609–629 (VWHITWLCILSFLAIIISLFI). At 630–662 (NSLNEDTEYTISAEEIKKIEHQYWKNIQKAGLK) the chain is on the cytoplasmic side.

The protein belongs to the heme-copper respiratory oxidase family. In terms of assembly, the cytochrome bo(3) ubiquinol oxidase complex is a heterooctamer of two A chains, two B chains, two C chains and two D chains. The cofactor is Cu(2+). Requires heme b as cofactor. It depends on Fe(II)-heme o as a cofactor.

It localises to the cell membrane. It carries out the reaction 2 a ubiquinol + O2 + n H(+)(in) = 2 a ubiquinone + 2 H2O + n H(+)(out). Its function is as follows. Cytochrome bo(3) ubiquinol oxidase is the terminal enzyme in the aerobic respiratory chain. Catalyzes the four-electron reduction of O2 to water, using a ubiquinol as a membrane soluble electron donor for molecular oxygen reduction. Has proton pump activity across the membrane in addition to electron transfer, pumping 2 protons/electron and generating a proton motive force. All the redox centers of this enzyme complex are located within the largest subunit, subunit I. Protons are probably pumped via D- and K- channels found in this subunit. The chain is Cytochrome bo(3) ubiquinol oxidase subunit 1 (cyoB) from Buchnera aphidicola subsp. Acyrthosiphon pisum (strain APS) (Acyrthosiphon pisum symbiotic bacterium).